The primary structure comprises 153 residues: Myosin regulatory light chain, smooth muscle (153 aa).

EF-hand domains are found at residues serine 12 to glycine 47, aspartate 81 to arginine 116, and phenylalanine 117 to glutamate 152. The Ca(2+) site is built by aspartate 25, asparagine 27, aspartate 29, and aspartate 36.

In molluscan muscle, calcium regulation is associated with myosin rather than with actin. Muscle myosin contains two types of light chains: the catalytic light chain, essential for ATPase activity, and the regulatory light chain, a calcium-binding protein responsible for Ca(2+) dependent binding and Ca(2+) dependent Mg-ATPase activity. The chain is Myosin regulatory light chain, smooth muscle from Halocynthia roretzi (Sea squirt).